Here is a 261-residue protein sequence, read N- to C-terminus: MASVLEKTKSKKIVFPTKKELSEAMATYTANLSAKFCKERGYFTVVLSGGDLISWLSELLEPKYQESIEWSKWHIFWVDERVVPLDHEDSNYKLAFDGFLSKVPIPIANIYPIDKDCAALGDAKSAALLYEECLKRLVNRNIIRTYKSSGFPQFDLQLLGMGPDGHMASLFPGHYQIKEKANLVTYITDSPKPPPKRITFTLPVINCASYNLMAVCDEAQADAVAKVFNHNFDLPAAWLTADVEAIWFLDQAAASKIPKGL.

It belongs to the glucosamine/galactosamine-6-phosphate isomerase family. 6-phosphogluconolactonase subfamily.

It localises to the cytoplasm. The protein resides in the cytosol. The catalysed reaction is 6-phospho-D-glucono-1,5-lactone + H2O = 6-phospho-D-gluconate + H(+). It participates in carbohydrate degradation; pentose phosphate pathway; D-ribulose 5-phosphate from D-glucose 6-phosphate (oxidative stage): step 2/3. Catalyzes the hydrolysis of 6-phosphogluconolactone to 6-phosphogluconate. The chain is Probable 6-phosphogluconolactonase 4 from Arabidopsis thaliana (Mouse-ear cress).